A 398-amino-acid chain; its full sequence is ATP-dependent RNA helicase FAL1 (398 aa).

A Q motif motif is present at residues 23–51 (ATFESMNLKPDLLRGIYFYGFEYPSSIQS). The region spanning 54-226 (ISQIISGKDV…KKFMSDPVKI (173 aa)) is the Helicase ATP-binding domain. 67–74 (AQSGTGKT) contributes to the ATP binding site. The short motif at 172–175 (DEAD) is the DEAD box element. Residues 237–398 (VIKQYYVDVE…PTPANLEELS (162 aa)) form the Helicase C-terminal domain.

This sequence belongs to the DEAD box helicase family. DDX48/FAL1 subfamily.

The protein localises to the nucleus. Its subcellular location is the nucleolus. The catalysed reaction is ATP + H2O = ADP + phosphate + H(+). Its function is as follows. ATP-dependent RNA helicase involved in 40S ribosomal subunit biogenesis. Required for the processing and cleavage of 35S pre-rRNA at sites A0, A1, and A2, leading to mature 18S rRNA. This is ATP-dependent RNA helicase FAL1 (FAL1) from Kluyveromyces lactis (strain ATCC 8585 / CBS 2359 / DSM 70799 / NBRC 1267 / NRRL Y-1140 / WM37) (Yeast).